An 843-amino-acid chain; its full sequence is uncharacterized protein (843 aa).

Residues 15 to 42 (CLRCKQRKIKCDKLWPTCSKCKASSSIC) constitute a DNA-binding region (zn(2)-C6 fungal-type).

The protein resides in the nucleus. Functionally, required for growth on non-fermentable carbon sources. This is an uncharacterized protein from Saccharomyces cerevisiae (strain ATCC 204508 / S288c) (Baker's yeast).